Consider the following 103-residue polypeptide: N(4)-acetylcytidine amidohydrolase (103 aa).

Residues 6–100 (ITFFQRFQED…AEDRFYVIEF (95 aa)) form the ASCH domain. Lys21 acts as the Proton acceptor in catalysis. Residue Thr24 is the Nucleophile of the active site. The Proton donor role is filled by Glu74.

It belongs to the N(4)-acetylcytidine amidohydrolase family.

The enzyme catalyses N(4)-acetylcytidine + H2O = cytidine + acetate + H(+). The catalysed reaction is N(4)-acetyl-2'-deoxycytidine + H2O = 2'-deoxycytidine + acetate + H(+). It catalyses the reaction N(4)-acetylcytosine + H2O = cytosine + acetate + H(+). Its function is as follows. Catalyzes the hydrolysis of N(4)-acetylcytidine (ac4C). The sequence is that of N(4)-acetylcytidine amidohydrolase from Klebsiella pneumoniae (strain 342).